Consider the following 215-residue polypeptide: Probable phosphoglycerate mutase GpmB (215 aa).

Residues 8–15 (RHGETQWN), 21–22 (QG), Arg-58, Arg-60, 82–85 (ELDM), 104–105 (RR), and 151–152 (GI) contribute to the substrate site. The active-site Tele-phosphohistidine intermediate is His-9. Residue Glu-82 is the Proton donor/acceptor of the active site.

It belongs to the phosphoglycerate mutase family. GpmB subfamily.

The enzyme catalyses (2R)-2-phosphoglycerate = (2R)-3-phosphoglycerate. It functions in the pathway carbohydrate degradation; glycolysis; pyruvate from D-glyceraldehyde 3-phosphate: step 3/5. This chain is Probable phosphoglycerate mutase GpmB, found in Klebsiella pneumoniae subsp. pneumoniae (strain ATCC 700721 / MGH 78578).